We begin with the raw amino-acid sequence, 161 residues long: Bacterial E2-like ubiquitin protein BilB (161 aa).

Cys-113 functions as the Glycyl thioester intermediate in the catalytic mechanism.

Component of the Bil (bacterial ISG15-like) antiviral defense system, composed of BilA, BilB, BilC and BilD. The Bil system specifically conjugates a ubiquitin-like moiety (bilA) to the bacteriophage central tail fiber (CTF, or tip attachment protein J) via reactions involving E1 (bilD) and E2 (bilB). Modifies CTF of phage SECphi27 and SECphi4, which probably interferes with assembly of the phage tail. Also modifies T5 baseplate hub protein pb3 (gene D16), but not gp27 of phage T6 (Bil defends against T6). BilB probably accepts ubiquitin from the BilA-BilD (E1) complex and catalyzes its covalent attachment to target protein (CTF). Bil-encoding bacteria produce mostly defective phage SECphi27, many of which have phage assembly defects, including no tails. SECphi27 phage progeny produced in E.coli with the Bil system inject less DNA into naive host cells, maybe because the phage are less able to adsorb and inject their DNA into host cells. Functionally, expression of the Bil system in E.coli (strain MG1655) confers about 100-fold resistance to phage SECphi27, SECphi18, SECphi6, SECphi4 and T5, but not to SECphi17. When cells expressing the Bil system are infected by phage SECphi27 at low multiplicity of infection (0.03 MOI) the culture survives, at 3.0 MOI the culture collapses at the same time as cells without the Bil system. This Collimonas sp. (strain OK412) protein is Bacterial E2-like ubiquitin protein BilB.